Consider the following 156-residue polypeptide: Small ribosomal subunit protein uS7 (156 aa).

It belongs to the universal ribosomal protein uS7 family. In terms of assembly, part of the 30S ribosomal subunit. Contacts proteins S9 and S11.

In terms of biological role, one of the primary rRNA binding proteins, it binds directly to 16S rRNA where it nucleates assembly of the head domain of the 30S subunit. Is located at the subunit interface close to the decoding center, probably blocks exit of the E-site tRNA. This is Small ribosomal subunit protein uS7 from Paraburkholderia phymatum (strain DSM 17167 / CIP 108236 / LMG 21445 / STM815) (Burkholderia phymatum).